The following is a 318-amino-acid chain: NADH-ubiquinone oxidoreductase chain 1 (318 aa).

The next 8 helical transmembrane spans lie at 3–23 (FVNLLTTIIPILLAVAFLTLL), 68–88 (LILFIIAPTLALTLALMMWIP), 102–122 (ILFMLALSSLAVYAILWSGWA), 146–166 (LAIIILSVLLMNGSFTLSTLI), 171–191 (HIWLLLPSWPLAMMWFISTLA), 222–242 (LFFLAEYANIIMMNALTTILF), 253–273 (EMYTTNFMLKTLLFTTFFLWI), and 294–314 (LPLTLVMCMWHITLPIILASI).

It belongs to the complex I subunit 1 family.

Its subcellular location is the mitochondrion inner membrane. The catalysed reaction is a ubiquinone + NADH + 5 H(+)(in) = a ubiquinol + NAD(+) + 4 H(+)(out). In terms of biological role, core subunit of the mitochondrial membrane respiratory chain NADH dehydrogenase (Complex I) that is believed to belong to the minimal assembly required for catalysis. Complex I functions in the transfer of electrons from NADH to the respiratory chain. The immediate electron acceptor for the enzyme is believed to be ubiquinone. The protein is NADH-ubiquinone oxidoreductase chain 1 (MT-ND1) of Nyctalus plancyi velutinus (Fine-haired noctule).